The primary structure comprises 568 residues: CDK5 and ABL1 enzyme substrate 1 (568 aa).

Over residues 1 to 31 (MAAATATAGTAACSSSSSSRGGSTDAAATSG) the composition is skewed to low complexity. 2 disordered regions span residues 1 to 94 (MAAA…PGAR) and 130 to 169 (PSLV…QEEL). An interaction with TDRD7 region spans residues 1–98 (MAAATATAGT…TKPGARARLS (98 aa)). Positions 33-45 (QPPPPPPATAPPE) are enriched in pro residues. Residues 46-56 (PLRKPRMDPRR) show a composition bias toward basic and acidic residues. The segment at 140 to 427 (PSQPPRSAPA…TTVIDYVKPS (288 aa)) is interaction with CDK3. A Phosphoserine modification is found at Ser-248. Position 274 is a phosphoserine; by CDK2 and CDK3 (Ser-274). Thr-350 is modified (phosphothreonine).

This sequence belongs to the cyclin family. As to quaternary structure, found in a complex with p53/TP53. Found in a number of complexes with CDK2, CDK3, CDK5, ABL1, TDRD7, CDK17, CCNA1, CCNE1 and TP73. Interacts with CDK2, CDK3, CDK5, ABL1 and TDRD7. Phosphorylated on Ser-274 by CCNE1/CDK3. Phosphorylated on serine/threonine residues by CDK5 and on tyrosine residues by ABL1. Also phosphorylated in vitro by CCNA1/CDK2, CCNE1/CDK2, CCNA1/CDK3 and CCNE1/CDK3. As to expression, ubiquitous. Expressed in postnatal day 1 (P1), in postmitotic neurons of the subplate, cortex (V/VI) and marginal zone; in postnatal day 7 (P7), in all layers of the cerebral cortex and in the CA1 and CA2 regions of the hippocampus (at protein level). Highly expressed in brain, kidney, liver and lung.

It is found in the nucleus. Its subcellular location is the cytoplasm. It localises to the cell projection. The protein resides in the growth cone. Its function is as follows. Cyclin-dependent kinase binding protein. Enhances cyclin-dependent kinase tyrosine phosphorylation by nonreceptor tyrosine kinases, such as that of CDK5 by activated ABL1, which leads to increased CDK5 activity and is critical for neuronal development, and that of CDK2 by WEE1, which leads to decreased CDK2 activity and growth inhibition. Positively affects neuronal outgrowth. Plays a role as a regulator for p53/p73-induced cell death. This is CDK5 and ABL1 enzyme substrate 1 (Cables1) from Mus musculus (Mouse).